Here is a 339-residue protein sequence, read N- to C-terminus: Tetraacyldisaccharide 4'-kinase (339 aa).

Position 44–51 (44–51 (TVGGTGKT)) interacts with ATP.

This sequence belongs to the LpxK family.

It carries out the reaction a lipid A disaccharide + ATP = a lipid IVA + ADP + H(+). It functions in the pathway glycolipid biosynthesis; lipid IV(A) biosynthesis; lipid IV(A) from (3R)-3-hydroxytetradecanoyl-[acyl-carrier-protein] and UDP-N-acetyl-alpha-D-glucosamine: step 6/6. In terms of biological role, transfers the gamma-phosphate of ATP to the 4'-position of a tetraacyldisaccharide 1-phosphate intermediate (termed DS-1-P) to form tetraacyldisaccharide 1,4'-bis-phosphate (lipid IVA). The polypeptide is Tetraacyldisaccharide 4'-kinase (Bdellovibrio bacteriovorus (strain ATCC 15356 / DSM 50701 / NCIMB 9529 / HD100)).